The primary structure comprises 100 residues: Urease subunit gamma (100 aa).

Belongs to the urease gamma subunit family. Heterotrimer of UreA (gamma), UreB (beta) and UreC (alpha) subunits. Three heterotrimers associate to form the active enzyme.

The protein localises to the cytoplasm. The enzyme catalyses urea + 2 H2O + H(+) = hydrogencarbonate + 2 NH4(+). It participates in nitrogen metabolism; urea degradation; CO(2) and NH(3) from urea (urease route): step 1/1. The polypeptide is Urease subunit gamma (Arthrobacter sp. (strain FB24)).